Reading from the N-terminus, the 276-residue chain is Glutamate 5-kinase (276 aa).

Lys14 contacts ATP. Ser54, Asp141, and Asn157 together coordinate substrate. ATP contacts are provided by residues 177–178 (SD) and 219–225 (TGGMLTK).

It belongs to the glutamate 5-kinase family.

The protein localises to the cytoplasm. It catalyses the reaction L-glutamate + ATP = L-glutamyl 5-phosphate + ADP. Its pathway is amino-acid biosynthesis; L-proline biosynthesis; L-glutamate 5-semialdehyde from L-glutamate: step 1/2. Catalyzes the transfer of a phosphate group to glutamate to form L-glutamate 5-phosphate. The protein is Glutamate 5-kinase of Listeria welshimeri serovar 6b (strain ATCC 35897 / DSM 20650 / CCUG 15529 / CIP 8149 / NCTC 11857 / SLCC 5334 / V8).